Reading from the N-terminus, the 161-residue chain is Allophycocyanin alpha chain (161 aa).

Residue N71 is modified to N4-methylasparagine. C81 serves as a coordination point for (2R,3E)-phycocyanobilin.

The protein belongs to the phycobiliprotein family. Heterodimer of an alpha and a beta chain. Post-translationally, contains one covalently linked phycocyanobilin chromophore.

It is found in the cellular thylakoid membrane. Light-harvesting photosynthetic bile pigment-protein from the phycobiliprotein complex. Allophycocyanin has a maximum absorption at approximately 650 nanometers. This chain is Allophycocyanin alpha chain (apcA), found in Synechocystis sp. (strain ATCC 27184 / PCC 6803 / Kazusa).